Reading from the N-terminus, the 654-residue chain is Heat shock 70 kDa protein 2 (654 aa).

Over residues 612-646 (AGGEGGAPGAGFPGAGGPGGFPGAGAGGAHSGGDD) the composition is skewed to gly residues. The interval 612 to 654 (AGGEGGAPGAGFPGAGGPGGFPGAGAGGAHSGGDDGPTVEEVD) is disordered.

It belongs to the heat shock protein 70 family.

In Paracoccidioides lutzii (strain ATCC MYA-826 / Pb01) (Paracoccidioides brasiliensis), this protein is Heat shock 70 kDa protein 2 (HSP70-2).